A 116-amino-acid polypeptide reads, in one-letter code: Large ribosomal subunit protein bL17 (116 aa).

Belongs to the bacterial ribosomal protein bL17 family. In terms of assembly, part of the 50S ribosomal subunit. Contacts protein L32.

This chain is Large ribosomal subunit protein bL17, found in Helicobacter pylori (strain J99 / ATCC 700824) (Campylobacter pylori J99).